A 400-amino-acid chain; its full sequence is Aspartate aminotransferase (400 aa).

The L-aspartate site is built by glycine 42 and asparagine 180. Lysine 241 carries the N6-(pyridoxal phosphate)lysine modification. An L-aspartate-binding site is contributed by arginine 373.

It belongs to the class-I pyridoxal-phosphate-dependent aminotransferase family. Homodimer. Pyridoxal 5'-phosphate serves as cofactor.

It is found in the cytoplasm. The catalysed reaction is L-aspartate + 2-oxoglutarate = oxaloacetate + L-glutamate. The chain is Aspartate aminotransferase (aspC) from Sulfolobus acidocaldarius (strain ATCC 33909 / DSM 639 / JCM 8929 / NBRC 15157 / NCIMB 11770).